Here is a 248-residue protein sequence, read N- to C-terminus: UPF0736 protein BC_1176 (248 aa).

The protein belongs to the UPF0736 family.

The sequence is that of UPF0736 protein BC_1176 from Bacillus cereus (strain ATCC 14579 / DSM 31 / CCUG 7414 / JCM 2152 / NBRC 15305 / NCIMB 9373 / NCTC 2599 / NRRL B-3711).